Reading from the N-terminus, the 212-residue chain is Redox-sensing transcriptional repressor Rex (212 aa).

The segment at residues 17–56 is a DNA-binding region (H-T-H motif); that stretch reads KYHRYLQELMENDIDRISSKELSEKIGFTASQIRQDLNCF. 91–96 is an NAD(+) binding site; it reads GAGNIG.

The protein belongs to the transcriptional regulatory Rex family. In terms of assembly, homodimer.

It is found in the cytoplasm. Its function is as follows. Modulates transcription in response to changes in cellular NADH/NAD(+) redox state. The protein is Redox-sensing transcriptional repressor Rex of Clostridium perfringens (strain SM101 / Type A).